Reading from the N-terminus, the 157-residue chain is uncharacterized protein (157 aa).

Disordered regions lie at residues Ala76–Gly105 and Val132–Gly157. Low complexity predominate over residues Pro135–Pro148.

The protein to M.pneumoniae MPN_091 and MPN_413.

This is an uncharacterized protein from Mycoplasma pneumoniae (strain ATCC 29342 / M129 / Subtype 1) (Mycoplasmoides pneumoniae).